We begin with the raw amino-acid sequence, 184 residues long: Inosine triphosphate pyrophosphatase (184 aa).

10 to 15 (TGNANK) lines the ITP pocket. Glu38 contributes to the Mg(2+) binding site. ITP contacts are provided by residues Lys50, 66–67 (DT), Lys83, 142–145 (FGWD), Lys163, and 168–169 (HR).

The protein belongs to the HAM1 NTPase family. Homodimer. Requires Mg(2+) as cofactor. Mn(2+) serves as cofactor.

It localises to the cytoplasm. It is found in the nucleus. It carries out the reaction ITP + H2O = IMP + diphosphate + H(+). It catalyses the reaction dITP + H2O = dIMP + diphosphate + H(+). The enzyme catalyses XTP + H2O = XMP + diphosphate + H(+). In terms of biological role, pyrophosphatase that hydrolyzes non-canonical purine nucleotides such as inosine triphosphate (ITP), deoxyinosine triphosphate (dITP) or xanthosine 5'-triphosphate (XTP) to their respective monophosphate derivatives. The enzyme does not distinguish between the deoxy- and ribose forms. Probably excludes non-canonical purines from RNA and DNA precursor pools, thus preventing their incorporation into RNA and DNA and avoiding chromosomal lesions. This Fusarium vanettenii (strain ATCC MYA-4622 / CBS 123669 / FGSC 9596 / NRRL 45880 / 77-13-4) (Fusarium solani subsp. pisi) protein is Inosine triphosphate pyrophosphatase.